The chain runs to 438 residues: Ribosomal protein uS12 methylthiotransferase RimO (438 aa).

The region spanning 5–116 is the MTTase N-terminal domain; it reads PTIAISHLGC…IVQVIQRVEN (112 aa). [4Fe-4S] cluster is bound by residues C14, C50, C79, C154, C158, and C161. Positions 140-369 constitute a Radical SAM core domain; it reads TTSEGVAYLR…MQIQQPISLQ (230 aa). Residues 372–438 enclose the TRAM domain; the sequence is CACIGDIVDV…IYDLYGEVIN (67 aa).

The protein belongs to the methylthiotransferase family. RimO subfamily. Requires [4Fe-4S] cluster as cofactor.

Its subcellular location is the cytoplasm. The enzyme catalyses L-aspartate(89)-[ribosomal protein uS12]-hydrogen + (sulfur carrier)-SH + AH2 + 2 S-adenosyl-L-methionine = 3-methylsulfanyl-L-aspartate(89)-[ribosomal protein uS12]-hydrogen + (sulfur carrier)-H + 5'-deoxyadenosine + L-methionine + A + S-adenosyl-L-homocysteine + 2 H(+). Catalyzes the methylthiolation of an aspartic acid residue of ribosomal protein uS12. In Gloeothece citriformis (strain PCC 7424) (Cyanothece sp. (strain PCC 7424)), this protein is Ribosomal protein uS12 methylthiotransferase RimO.